The primary structure comprises 405 residues: L-carnitine CoA-transferase (405 aa).

Residues lysine 97 and arginine 104 each coordinate CoA. Residue aspartate 169 is the Nucleophile of the active site.

The protein belongs to the CoA-transferase III family. CaiB subfamily. In terms of assembly, homodimer.

It is found in the cytoplasm. The catalysed reaction is crotonobetainyl-CoA + (R)-carnitine = crotonobetaine + (R)-carnitinyl-CoA. It carries out the reaction 4-(trimethylamino)butanoyl-CoA + (R)-carnitine = (R)-carnitinyl-CoA + 4-(trimethylamino)butanoate. The protein operates within amine and polyamine metabolism; carnitine metabolism. Its function is as follows. Catalyzes the reversible transfer of the CoA moiety from gamma-butyrobetainyl-CoA to L-carnitine to generate L-carnitinyl-CoA and gamma-butyrobetaine. Is also able to catalyze the reversible transfer of the CoA moiety from gamma-butyrobetainyl-CoA or L-carnitinyl-CoA to crotonobetaine to generate crotonobetainyl-CoA. The protein is L-carnitine CoA-transferase of Escherichia coli (strain 55989 / EAEC).